Reading from the N-terminus, the 666-residue chain is Enzymatic polyprotein (666 aa).

Asp-54 is a catalytic residue. In terms of domain architecture, Reverse transcriptase spans 215 to 445 (ENPIDPIKSK…EKINFLGLEI (231 aa)).

This sequence belongs to the caulimoviridae enzymatic polyprotein family.

It carries out the reaction DNA(n) + a 2'-deoxyribonucleoside 5'-triphosphate = DNA(n+1) + diphosphate. Functionally, encodes for at least two polypeptides: protease (PR) and reverse transcriptase (RT). The protease processes the polyprotein in cis. Reverse transcriptase is multifunctional enzyme that converts the viral RNA genome into dsDNA in viral cytoplasmic capsids. This enzyme displays a DNA polymerase activity that can copy either DNA or RNA templates, and a ribonuclease H (RNase H) activity that cleaves the RNA strand of RNA-DNA heteroduplexes in a partially processive 3'- to 5'-endonucleasic mode. Neo-synthesized pregenomic RNA (pgRNA) are encapsidated, and reverse-transcribed inside the nucleocapsid. Partial (+)DNA is synthesized from the (-)DNA template and generates the relaxed circular DNA (RC-DNA) genome. After budding and infection, the RC-DNA migrates in the nucleus, and is converted into a plasmid-like covalently closed circular DNA (cccDNA). The polypeptide is Enzymatic polyprotein (Figwort mosaic virus (strain DxS) (FMV)).